A 101-amino-acid chain; its full sequence is Small ribosomal subunit protein uS14 (101 aa).

It belongs to the universal ribosomal protein uS14 family. In terms of assembly, part of the 30S ribosomal subunit. Contacts proteins S3 and S10.

Binds 16S rRNA, required for the assembly of 30S particles and may also be responsible for determining the conformation of the 16S rRNA at the A site. The sequence is that of Small ribosomal subunit protein uS14 from Paenarthrobacter aurescens (strain TC1).